The chain runs to 361 residues: 3-dehydroquinate synthase (361 aa).

Residues 104 to 108 (GVIGD), 128 to 129 (TT), K141, K150, and 168 to 171 (FLRT) contribute to the NAD(+) site. 3 residues coordinate Zn(2+): E183, H246, and H263.

Belongs to the sugar phosphate cyclases superfamily. Dehydroquinate synthase family. Requires Co(2+) as cofactor. The cofactor is Zn(2+). NAD(+) serves as cofactor.

Its subcellular location is the cytoplasm. The enzyme catalyses 7-phospho-2-dehydro-3-deoxy-D-arabino-heptonate = 3-dehydroquinate + phosphate. Its pathway is metabolic intermediate biosynthesis; chorismate biosynthesis; chorismate from D-erythrose 4-phosphate and phosphoenolpyruvate: step 2/7. In terms of biological role, catalyzes the conversion of 3-deoxy-D-arabino-heptulosonate 7-phosphate (DAHP) to dehydroquinate (DHQ). The sequence is that of 3-dehydroquinate synthase from Opitutus terrae (strain DSM 11246 / JCM 15787 / PB90-1).